Here is a 257-residue protein sequence, read N- to C-terminus: Thioredoxin-dependent peroxide reductase, mitochondrial (257 aa).

The transit peptide at 1–62 directs the protein to the mitochondrion; it reads MAATAGRLFR…FAFSTSSSYH (62 aa). Residues 64 to 222 enclose the Thioredoxin domain; it reads PAVTQHAPYF…TLRLVKAFQF (159 aa). Lysine 84 is subject to N6-succinyllysine. Lysine 92 bears the N6-acetyllysine; alternate mark. At lysine 92 the chain carries N6-succinyllysine; alternate. Cysteine 109 (cysteine sulfenic acid (-SOH) intermediate) is an active-site residue. Threonine 147 is subject to Phosphothreonine.

It belongs to the peroxiredoxin family. AhpC/Prx1 subfamily. Homodimer; disulfide-linked, upon oxidation. 6 homodimers assemble to form a ring-like dodecamer. Interacts with NEK6. Interacts with LRRK2. Interacts with MAP3K13. Interacts with RPS6KC1 (via PX domain). In terms of processing, phosphorylated by LRRK2; phosphorylation reduces perodixase activity. Post-translationally, the enzyme can be inactivated by further oxidation of the cysteine sulfenic acid (C(P)-SOH) to sulphinic acid (C(P)-SO2H) and sulphonic acid (C(P)-SO3H) instead of its condensation to a disulfide bond. S-palmitoylated. In terms of tissue distribution, predominantly expressed in adrenal cortex. Also detected in liver, renal cortex and medulla, and adrenal medulla (at protein level).

The protein resides in the mitochondrion matrix. It localises to the cytoplasm. The protein localises to the early endosome. It carries out the reaction a hydroperoxide + [thioredoxin]-dithiol = an alcohol + [thioredoxin]-disulfide + H2O. Thiol-specific peroxidase that catalyzes the reduction of hydrogen peroxide and organic hydroperoxides to water and alcohols, respectively. Plays a role in cell protection against oxidative stress by detoxifying peroxides. Acts synergistically with MAP3K13 to regulate the activation of NF-kappa-B in the cytosol. Required for the maintenance of physical strength. In Bos taurus (Bovine), this protein is Thioredoxin-dependent peroxide reductase, mitochondrial (PRDX3).